We begin with the raw amino-acid sequence, 343 residues long: Putative outer membrane protein y4fJ (343 aa).

A signal peptide spans 1–17 (MRMNFSTVLLGSSVALA).

This sequence belongs to the alphaproteobacteria porin family.

It is found in the cell outer membrane. Its function is as follows. May act as an outer membrane pore. The sequence is that of Putative outer membrane protein y4fJ from Sinorhizobium fredii (strain NBRC 101917 / NGR234).